A 279-amino-acid chain; its full sequence is Ribosomal RNA small subunit methyltransferase A (279 aa).

His-11, Leu-13, Gly-42, Glu-63, Asp-88, and Asn-104 together coordinate S-adenosyl-L-methionine.

The protein belongs to the class I-like SAM-binding methyltransferase superfamily. rRNA adenine N(6)-methyltransferase family. RsmA subfamily.

It localises to the cytoplasm. The catalysed reaction is adenosine(1518)/adenosine(1519) in 16S rRNA + 4 S-adenosyl-L-methionine = N(6)-dimethyladenosine(1518)/N(6)-dimethyladenosine(1519) in 16S rRNA + 4 S-adenosyl-L-homocysteine + 4 H(+). Functionally, specifically dimethylates two adjacent adenosines (A1518 and A1519) in the loop of a conserved hairpin near the 3'-end of 16S rRNA in the 30S particle. May play a critical role in biogenesis of 30S subunits. This is Ribosomal RNA small subunit methyltransferase A from Synechococcus sp. (strain JA-3-3Ab) (Cyanobacteria bacterium Yellowstone A-Prime).